The chain runs to 199 residues: Interleukin-11 (199 aa).

Positions 1-21 (MNCVCRLVLVVLSLWPDRVVA) are cleaved as a signal peptide. The important for interaction with IL11RA and for the stimulation of cell proliferation stretch occupies residues 182–190 (HLTLDWAVR).

Belongs to the IL-6 superfamily. In terms of assembly, interacts with either IL11RA1 or IL11RA2 to associate with IL6ST, giving rise to a multimeric signaling complex.

Its subcellular location is the secreted. Cytokine that stimulates the proliferation of hematopoietic stem cells and megakaryocyte progenitor cells and induces megakaryocyte maturation resulting in increased platelet production. Also promotes the proliferation of hepatocytes in response to liver damage. Binding to its receptor formed by IL6ST and either IL11RA1 or IL11RA2 activates a signaling cascade that promotes cell proliferation, also in the context of various cancers. Signaling leads to the activation of intracellular protein kinases and the phosphorylation of STAT3. The interaction with the membrane-bound IL11RA and IL6ST stimulates 'classic signaling', whereas the binding of IL11 and soluble IL11RA to IL6ST stimulates 'trans-signaling'. The protein is Interleukin-11 of Mus musculus (Mouse).